The sequence spans 1255 residues: Pre-mRNA-splicing factor ATP-dependent RNA helicase DEAH7 (1255 aa).

The disordered stretch occupies residues 1-316 (MGVDPFKTTE…SDEDRSQGAE (316 aa)). Basic and acidic residues predominate over residues 13–60 (EADKETNGGVPVKDKLTFKAPERKSRLGLDARAIEKKDNAKTEGEFKV). Residues 109 to 137 (AQESTVTTENAGTSDISITPRTLSCTSSY) show a composition bias toward polar residues. Short sequence motifs (nuclear localization signal) lie at residues 144–153 (RHREEHRRDR) and 172–191 (RRRESYRQSDRDYHGEKRRR). The segment covering 144–219 (RHREEHRRDR…EWERSPHGDR (76 aa)) has biased composition (basic and acidic residues). 2 stretches are compositionally biased toward low complexity: residues 220–240 (GSSYSRRPQPSPSPMLAAASP) and 271–290 (PIRASGSSIRSSSSRYGGRS). The segment covering 297-316 (REGDLTNEGHSDEDRSQGAE) has biased composition (basic and acidic residues). Residues 568–731 (LQVIRENQVI…FGSVPIFNIP (164 aa)) form the Helicase ATP-binding domain. Residue 581 to 588 (GETGSGKT) participates in ATP binding. Positions 678 to 681 (DEAH) match the DEAH box motif. The Helicase C-terminal domain occupies 753-933 (AVKQAMTIHI…NVVLLLKSLK (181 aa)). A compositionally biased stretch (basic and acidic residues) spans 1190–1224 (LEHKKKQKEEKSGMEEEMEKLRRDQVESELRSKER). The segment at 1190-1255 (LEHKKKQKEE…TFLRPKKLGL (66 aa)) is disordered.

Belongs to the DEAD box helicase family. DEAH subfamily. PRP16 sub-subfamily. In terms of assembly, interacts with the Phytophthora PSR1 protein.

The protein resides in the nucleus. It carries out the reaction ATP + H2O = ADP + phosphate + H(+). Its function is as follows. Involved in pre-mRNA splicing by mediating structural transitions of the spliceosome during the catalytic step. Facilitates expression of genes involved in auxin-mediated development including male-gametophyte transmission, apical-basal patterning of embryonic and gynoecium development, stamen development, phyllotactic flower positioning, and vascular development. Also involved in root-meristem maintenance and planar polarity of root-hair positioning. Acts as a component of RNA silencing that regulates distinct classes of endogenous small RNAs. Functions as a positive regulator of plant immunity. The chain is Pre-mRNA-splicing factor ATP-dependent RNA helicase DEAH7 from Arabidopsis thaliana (Mouse-ear cress).